A 218-amino-acid polypeptide reads, in one-letter code: MGNITAKLVKDLRDKTGAGMMDCKKALNETEGNLDKALEWLRKKGIASAEKKSGRVAAEGSIGSYIHTGSRVGVLLELNCETDFVARGDIFQSLLKDVSMQVAACPNVEYVSIDEIPEDVVKKEKQIEMGRDDLSGKPEQIKEKIVEGRIAKRLNELVLLSQPYIKDSSLTVEELVKQAAAKIGENIKVRRFTRYTLGEGIEKNQMDFAEEVASMQTN.

Residues 82-85 form an involved in Mg(2+) ion dislocation from EF-Tu region; the sequence is TDFV.

This sequence belongs to the EF-Ts family.

Its subcellular location is the cytoplasm. Functionally, associates with the EF-Tu.GDP complex and induces the exchange of GDP to GTP. It remains bound to the aminoacyl-tRNA.EF-Tu.GTP complex up to the GTP hydrolysis stage on the ribosome. In Prochlorococcus marinus (strain MIT 9215), this protein is Elongation factor Ts.